The chain runs to 257 residues: NAD-capped RNA hydrolase NudC (257 aa).

The substrate site is built by lysine 25 and arginine 69. Residues cysteine 98 and cysteine 101 each coordinate Zn(2+). Glutamate 111 is a substrate binding site. Zn(2+) is bound by residues cysteine 116 and cysteine 119. Residue tyrosine 124 coordinates substrate. The Nudix hydrolase domain occupies 125–248 (PQIAPCIIVA…TVARRLIEDT (124 aa)). The a divalent metal cation site is built by alanine 158, glutamate 174, and glutamate 178. The Nudix box motif lies at 159-180 (GFVEVGETLEQAVAREVMEESG). 192 to 199 (QPWPFPQS) lines the substrate pocket. Glutamate 219 serves as a coordination point for a divalent metal cation. Residue alanine 241 participates in substrate binding.

Belongs to the Nudix hydrolase family. NudC subfamily. Homodimer. Mg(2+) is required as a cofactor. It depends on Mn(2+) as a cofactor. Requires Zn(2+) as cofactor.

It catalyses the reaction a 5'-end NAD(+)-phospho-ribonucleoside in mRNA + H2O = a 5'-end phospho-adenosine-phospho-ribonucleoside in mRNA + beta-nicotinamide D-ribonucleotide + 2 H(+). The enzyme catalyses NAD(+) + H2O = beta-nicotinamide D-ribonucleotide + AMP + 2 H(+). It carries out the reaction NADH + H2O = reduced beta-nicotinamide D-ribonucleotide + AMP + 2 H(+). Its function is as follows. mRNA decapping enzyme that specifically removes the nicotinamide adenine dinucleotide (NAD) cap from a subset of mRNAs by hydrolyzing the diphosphate linkage to produce nicotinamide mononucleotide (NMN) and 5' monophosphate mRNA. The NAD-cap is present at the 5'-end of some mRNAs and stabilizes RNA against 5'-processing. Has preference for mRNAs with a 5'-end purine. Catalyzes the hydrolysis of a broad range of dinucleotide pyrophosphates. In Escherichia coli (strain 55989 / EAEC), this protein is NAD-capped RNA hydrolase NudC.